The sequence spans 224 residues: UPF0441 protein PC1_0312 (224 aa).

Positions 178 to 224 (PKTALAPKPATTSTITRGGFGETVAKQNSMQRSSASSSSSSSRSMGG) are disordered. The segment covering 209–224 (RSSASSSSSSSRSMGG) has biased composition (low complexity).

Belongs to the UPF0441 family.

The sequence is that of UPF0441 protein PC1_0312 from Pectobacterium carotovorum subsp. carotovorum (strain PC1).